Here is a 277-residue protein sequence, read N- to C-terminus: Cis-2,3-dihydrobiphenyl-2,3-diol dehydrogenase (277 aa).

Position 9–33 (9–33) interacts with NAD(+); the sequence is LITGGASGLGRALVDRFVAERAKVA. Ser142 lines the substrate pocket. The active-site Proton acceptor is Tyr155.

This sequence belongs to the short-chain dehydrogenases/reductases (SDR) family. As to quaternary structure, homotetramer.

The enzyme catalyses (2R,3S)-3-phenylcyclohexa-3,5-diene-1,2-diol + NAD(+) = biphenyl-2,3-diol + NADH + H(+). Its pathway is xenobiotic degradation; biphenyl degradation; 2-hydroxy-2,4-pentadienoate and benzoate from biphenyl: step 2/4. The polypeptide is Cis-2,3-dihydrobiphenyl-2,3-diol dehydrogenase (bphB) (Pseudomonas putida (Arthrobacter siderocapsulatus)).